A 249-amino-acid polypeptide reads, in one-letter code: Ribitol 2-dehydrogenase (249 aa).

An NAD(+)-binding site is contributed by 20-43; that stretch reads TGAASGIGLECARTLLGAGAKVVL. Tyr-160 functions as the Proton acceptor in the catalytic mechanism.

It belongs to the short-chain dehydrogenases/reductases (SDR) family. As to quaternary structure, homotetramer.

It catalyses the reaction ribitol + NAD(+) = D-ribulose + NADH + H(+). The protein is Ribitol 2-dehydrogenase (rbtD) of Klebsiella aerogenes (Enterobacter aerogenes).